A 247-amino-acid chain; its full sequence is Cell division protein ZapD (247 aa).

This sequence belongs to the ZapD family. As to quaternary structure, interacts with FtsZ.

The protein localises to the cytoplasm. Cell division factor that enhances FtsZ-ring assembly. Directly interacts with FtsZ and promotes bundling of FtsZ protofilaments, with a reduction in FtsZ GTPase activity. The sequence is that of Cell division protein ZapD from Citrobacter koseri (strain ATCC BAA-895 / CDC 4225-83 / SGSC4696).